We begin with the raw amino-acid sequence, 314 residues long: Carbamate kinase (314 aa).

It belongs to the carbamate kinase family. Homodimer.

It localises to the cytoplasm. It catalyses the reaction hydrogencarbonate + NH4(+) + ATP = carbamoyl phosphate + ADP + H2O + H(+). Functionally, carbamate kinase that plays a biosynthetic role in that it produces carbamoyl-phosphate. This Pyrococcus furiosus (strain ATCC 43587 / DSM 3638 / JCM 8422 / Vc1) protein is Carbamate kinase (cpkA).